The primary structure comprises 339 residues: Endo-beta-N-acetylglucosaminidase F1 (339 aa).

Positions 1-50 form a signal peptide, or 51, or 52; it reads MKKFINQFSASLKNNILVFLAFPFVWTSCARDNPLSSENSNISPNAAARA. One can recognise a GH18 domain in the interval 60-326; it reads IKLFSFTEVN…KLIAKELYGD (267 aa). Glu-182 serves as the catalytic Proton donor. Residue Trp-339 is a propeptide, removed in mature form.

The protein belongs to the glycosyl hydrolase 18 family. In terms of assembly, monomer.

It localises to the secreted. It carries out the reaction an N(4)-(oligosaccharide-(1-&gt;3)-[oligosaccharide-(1-&gt;6)]-beta-D-Man-(1-&gt;4)-beta-D-GlcNAc-(1-&gt;4)-alpha-D-GlcNAc)-L-asparaginyl-[protein] + H2O = an oligosaccharide-(1-&gt;3)-[oligosaccharide-(1-&gt;6)]-beta-D-Man-(1-&gt;4)-D-GlcNAc + N(4)-(N-acetyl-beta-D-glucosaminyl)-L-asparaginyl-[protein]. Functionally, endohydrolysis of the di-N-acetylchitobiosyl unit in high-mannose glycopeptides and glycoproteins. Does not hydrolyze complex bi- or triantennary glycans. The presence of a core-bound fucose impedes endo F1 hydrolysis. The sequence is that of Endo-beta-N-acetylglucosaminidase F1 (endOF1) from Elizabethkingia meningoseptica (Chryseobacterium meningosepticum).